An 889-amino-acid chain; its full sequence is Oxysterol-binding protein-related protein 8 (889 aa).

Met1 carries the post-translational modification N-acetylmethionine. Residues 1 to 129 (MEAALADGEP…SLKVQKKNYR (129 aa)) form a disordered region. Phosphoserine is present on residues Ser14, Ser65, and Ser68. The span at 62–71 (PSLSPASLHS) shows a compositional bias: polar residues. Basic and acidic residues-rich tracts occupy residues 73–88 (GFER…KDDS), 95–109 (SKSE…EKDS), and 116–129 (TKKE…KNYR). Positions 148–265 (VIVMADWLKI…WMDALELALK (118 aa)) constitute a PH domain. Phosphoserine is present on residues Ser314, Ser328, and Ser342. Over residues 321–336 (FKDQDLYSDKSDKEND) the composition is skewed to basic and acidic residues. The interval 321–374 (FKDQDLYSDKSDKENDPEHDESDNEVLGKSEESDTDTSERQDDSYIDPEPVEPL) is disordered. The segment covering 346–363 (VLGKSEESDTDTSERQDD) has biased composition (basic and acidic residues). A 1,2-diacyl-sn-glycero-3-phospho-(1D-myo-inositol 4-phosphate) is bound by residues 420 to 425 (LSRVVL), 482 to 485 (KPYN), and 514 to 515 (HH). A 1,2-diacyl-sn-glycero-3-phospho-L-serine contacts are provided by residues 420 to 425 (LSRVVL) and Asn485. Ser540 contributes to the a 1,2-diacyl-sn-glycero-3-phospho-L-serine binding site. 3 residues coordinate a 1,2-diacyl-sn-glycero-3-phospho-(1D-myo-inositol 4-phosphate): Lys706, Glu710, and Arg714. The tract at residues 772–823 (HRTPMVSVPKMKHKPTRQQKKVVKGYSSPEPDIQDSSGSEAQSVKPSTRRKK) is disordered. The segment covering 781 to 794 (KMKHKPTRQQKKVV) has biased composition (basic residues). Residues 805–817 (QDSSGSEAQSVKP) are compositionally biased toward polar residues. Phosphoserine occurs at positions 807, 808, 810, and 814. Residues 871–888 (YFVIFLLILLQVIINFIF) form a helical membrane-spanning segment.

The protein belongs to the OSBP family. In terms of assembly, interacts with SPAG5. Interacts with NUP62. As to expression, widely expressed. Most abundant in liver, spleen, kidney, brain and adipose tissue.

The protein resides in the endoplasmic reticulum membrane. It localises to the nucleus membrane. Functionally, lipid transporter involved in lipid countertransport between the endoplasmic reticulum and the plasma membrane: specifically exchanges phosphatidylserine with phosphatidylinositol 4-phosphate (PI4P), delivering phosphatidylserine to the plasma membrane in exchange for PI4P, which is degraded by the SAC1/SACM1L phosphatase in the endoplasmic reticulum. Binds phosphatidylserine and PI4P in a mutually exclusive manner. Binds oxysterol, 25-hydroxycholesterol and cholesterol. In Mus musculus (Mouse), this protein is Oxysterol-binding protein-related protein 8.